A 90-amino-acid polypeptide reads, in one-letter code: Large ribosomal subunit protein bL31 (90 aa).

The interval Y65–K90 is disordered. Residues N76–K90 are compositionally biased toward basic residues.

It belongs to the bacterial ribosomal protein bL31 family. Type A subfamily. As to quaternary structure, part of the 50S ribosomal subunit.

Binds the 23S rRNA. This Trichodesmium erythraeum (strain IMS101) protein is Large ribosomal subunit protein bL31.